Consider the following 636-residue polypeptide: MAESWQDCPALGPGWKRRESFRKSGASFGRSDIYYQSPTGEKIRSKVELTRYLGPACDLTLFDFRQGTLCHPIPKTHPLAVPSKKKKKPSKPAKTKKQQVGLQRSEVRIETPQGEYKAPTATALASLSVSASASSSASASASASSHAPVCCENCGIHFSWDGVKRQRLKTLCKDCRAQRIAFNREQRMFKRVGCGDCAACLVKEDCGVCSTCRLQLPSDVASGLYCKCERRRCLRIMEKSRGCGVCRGCQTQEDCGHCCICLRSPRPGLKRQWRCLQRRCFWGKRDSSKRGSKVASQRHSQAPPLPPHPASQYTEPTELHISDIAPTSPAEFIYYCVDEDEDELQPYTNQRQNRKCGACAACLRRMDCGRCDFCCDKPKFGGGNQKRQKCRWRQCLQFAMKRLLPSAGSGSGEGAGLRPYQTHQTHQKRPASARQLQLSSPLKAPWAVVTAPPGPVRDSRKQQAGRGSVLPQPDTDFVFLQEGTSSAMQMPGTAAASTEVPVQAAQCSAPSWVVALPQVKQETADAPEEWTAVTTFLTSSTLQSGFPSKAADPDLSPVKQEPPGPEEDGEEKKDDVSETTPAEEIGGVGTPVITEIFSLGGTRLRDAEAWLPRLHKLLAVNEKEYFTELQLKEEVL.

Residues 1–69 enclose the MBD domain; it reads MAESWQDCPA…TLFDFRQGTL (69 aa). Residues 75 to 113 form a disordered region; sequence KTHPLAVPSKKKKKPSKPAKTKKQQVGLQRSEVRIETPQ. Residues 83–97 show a composition bias toward basic residues; it reads SKKKKKPSKPAKTKK. The Nuclear localization signal motif lies at 84–88; it reads KKKKK. Lys117 is covalently cross-linked (Glycyl lysine isopeptide (Lys-Gly) (interchain with G-Cter in SUMO2)). 2 consecutive CXXC-type zinc fingers follow at residues 187–234 and 235–281; these read RMFK…RRCL and RIME…RRCF. Zn(2+) contacts are provided by Cys194, Cys197, Cys200, Cys206, Cys209, Cys212, Cys228, Cys233, Cys243, Cys246, Cys249, Cys255, Cys258, Cys261, Cys275, and Cys280. The segment at 291–314 is disordered; it reads GSKVASQRHSQAPPLPPHPASQYT. A Glycyl lysine isopeptide (Lys-Gly) (interchain with G-Cter in SUMO2) cross-link involves residue Lys293. A CXXC-type 3 zinc finger spans residues 348–396; that stretch reads TNQRQNRKCGACAACLRRMDCGRCDFCCDKPKFGGGNQKRQKCRWRQCL. Cys356, Cys359, Cys362, Cys368, Cys371, Cys374, Cys390, and Cys395 together coordinate Zn(2+). The interval 407–474 is disordered; sequence AGSGSGEGAG…GRGSVLPQPD (68 aa). Ser409 is modified (phosphoserine). Residues Lys443 and Lys461 each participate in a glycyl lysine isopeptide (Lys-Gly) (interchain with G-Cter in SUMO2) cross-link. Glycyl lysine isopeptide (Lys-Gly) (interchain with G-Cter in SUMO2); alternate cross-links involve residues Lys520 and Lys559. The segment at 543–589 is disordered; the sequence is QSGFPSKAADPDLSPVKQEPPGPEEDGEEKKDDVSETTPAEEIGGVG. A transcriptional repression domain (TRD) region spans residues 550 to 612; sequence AADPDLSPVK…RLRDAEAWLP (63 aa).

As to quaternary structure, interacts with OASL, ATF7IP, ATF7IP2 and BAHD1. Binds CHAF1A and the SUV39H1-CBX5 complex via the MBD domain. Binds MGP via the TRD domain. May be part of the MeCP1 complex. During DNA replication, it recruits SETDB1 to form a S phase-specific complex that facilitates methylation of H3 'Lys-9' during replication-coupled chromatin assembly and is at least composed of the CAF-1 subunit CHAF1A, MBD1 and SETDB1. In terms of assembly, interacts with the Ten-1 ICD form of TENM1. Sumoylated, sumoylation may increase interaction with ATF7IP. Highly expressed in kidney, liver and brain. Detected at lower levels in heart, lung, skeletal muscle, spleen and testis.

Its subcellular location is the nucleus. The protein resides in the nucleus matrix. The protein localises to the nucleus speckle. It is found in the chromosome. Transcriptional repressor that binds CpG islands in promoters where the DNA is methylated at position 5 of cytosine within CpG dinucleotides. Binding is abolished by the presence of 7-mG that is produced by DNA damage by methylmethanesulfonate (MMS). Acts as transcriptional repressor and plays a role in gene silencing by recruiting ATF7IP, which in turn recruits factors such as the histone methyltransferase SETDB1. Probably forms a complex with SETDB1 and ATF7IP that represses transcription and couples DNA methylation and histone 'Lys-9' trimethylation. Isoform 1 can also repress transcription from unmethylated promoters. The chain is Methyl-CpG-binding domain protein 1 from Mus musculus (Mouse).